We begin with the raw amino-acid sequence, 3068 residues long: Highly reducing polyketide synthase 17 (3068 aa).

A Ketosynthase family 3 (KS3) domain is found at 100–526 (IEPIAIVGAS…GTNAHAIMER (427 aa)). Residues Cys-274, His-410, and His-449 each act as for beta-ketoacyl synthase activity in the active site. A malonyl-CoA:ACP transacylase (MAT) domain region spans residues 627-938 (YVFTGQGAQW…LAGPIRQCLA (312 aa)). Ser-721 functions as the For malonyltransferase activity in the catalytic mechanism. Positions 1027–1160 (HHLLGVRMTE…GVVEGVMTLD (134 aa)) are N-terminal hotdog fold. The tract at residues 1027–1311 (HHLLGVRMTE…RASNIDMTIV (285 aa)) is dehydratase (DH) domain. Residues 1027–1334 (HHLLGVRMTE…SRSLAAHVDG (308 aa)) form the PKS/mFAS DH domain. The active-site Proton acceptor; for dehydratase activity is His-1059. The segment at 1179–1334 (NRTMVIPEEL…SRSLAAHVDG (156 aa)) is C-terminal hotdog fold. Asp-1247 functions as the Proton donor; for dehydratase activity in the catalytic mechanism. The interval 1735–2037 (LGPVQSSKGD…LVRQGGKVIL (303 aa)) is enoylreductase (ER) domain. Residues 2062 to 2240 (AAYVVAGGMG…FLSMNIGWIE (179 aa)) form a catalytic ketoreductase (KR) domain region. One can recognise a Carrier domain in the interval 2345–2423 (TIIDFISSAI…DLAEKVASRS (79 aa)). Residue Ser-2383 is modified to O-(pantetheine 4'-phosphoryl)serine. The tract at residues 2831–3062 (FDVASLGLRS…SCMITSLLED (232 aa)) is choline/carnitine acyltransferase (cAT) domain.

It functions in the pathway secondary metabolite biosynthesis. Its function is as follows. Highly reducing polyketide synthase; part of the gene cluster that mediates the biosynthesis of (2Z,4E,6E,10E)-9-hydroxydodeca-2,4,6,10-tetraenoic acid (BAA), (2E,4E,6E,10E)-9-hydroxydodeca-2,4,6,10-tetraenoic acid (BAB), and (2Z,4E,6E)-octa-2,4,6-trienedioic acid (PBA). The highly reducing polyketide synthase Ba17a is sufficent to produce PBA and BAA. The still to be characterized protein Ba17b leads to an increased production of BAA as well as to the production of the new compound BAB. BAA does not possess insecticidal activity against G.mellonella larvae, however, both BAA and BAB increase the growth of Candida albicans and BAA can mitigate the fungicidal effects of fluconazole over C.albicans, suggesting that generalist pathogens such as M.anisopliae, can potentially manipulate the yeast microbiota found in arthropods (and anywhere else) by the activity of compounds as BAA and BAB. This Metarhizium anisopliae (Entomophthora anisopliae) protein is Highly reducing polyketide synthase 17.